The chain runs to 498 residues: Argininosuccinate lyase 1 (498 aa).

It belongs to the lyase 1 family. Argininosuccinate lyase subfamily.

The protein localises to the cytoplasm. It catalyses the reaction 2-(N(omega)-L-arginino)succinate = fumarate + L-arginine. The protein operates within amino-acid biosynthesis; L-arginine biosynthesis; L-arginine from L-ornithine and carbamoyl phosphate: step 3/3. The protein is Argininosuccinate lyase 1 of Shouchella clausii (strain KSM-K16) (Alkalihalobacillus clausii).